We begin with the raw amino-acid sequence, 294 residues long: NAD kinase (294 aa).

D72 (proton acceptor) is an active-site residue. NAD(+) is bound by residues D72 to G73, N146 to D147, R157, R174, D176, T187 to S192, and Q247.

Belongs to the NAD kinase family. The cofactor is a divalent metal cation.

The protein resides in the cytoplasm. It carries out the reaction NAD(+) + ATP = ADP + NADP(+) + H(+). Functionally, involved in the regulation of the intracellular balance of NAD and NADP, and is a key enzyme in the biosynthesis of NADP. Catalyzes specifically the phosphorylation on 2'-hydroxyl of the adenosine moiety of NAD to yield NADP. This chain is NAD kinase, found in Saccharophagus degradans (strain 2-40 / ATCC 43961 / DSM 17024).